The sequence spans 419 residues: Zinc finger protein Pegasus (419 aa).

Lys-5 participates in a covalent cross-link: Glycyl lysine isopeptide (Lys-Gly) (interchain with G-Cter in SUMO2). 3 C2H2-type zinc fingers span residues 82–104 (LKCR…IRIH), 110–132 (HRCH…MRSH), and 138–161 (YKCE…RRKH). Residue Lys-185 forms a Glycyl lysine isopeptide (Lys-Gly) (interchain with G-Cter in SUMO2) linkage. The segment covering 223–236 (QTDSYESMAKTTPT) has biased composition (polar residues). Disordered regions lie at residues 223–245 (QTDS…DPQE) and 288–356 (MQQP…PTLP). The span at 289 to 311 (QQPSAQAVVSAVSASLPQSSSPA) shows a compositional bias: low complexity. The span at 332 to 349 (SEPSAHTSTPSMGNSQPS) shows a compositional bias: polar residues. 2 consecutive C2H2-type zinc fingers follow at residues 364-386 (HHCQ…MGCH) and 392-416 (FQCN…RGQH).

It belongs to the Ikaros C2H2-type zinc-finger protein family. Self-associates. Interacts with other family members; IKZF1, IKZF2, IKZF3 and IKZF4.

It is found in the nucleus. In terms of biological role, transcriptional repressor that binds the core 5'GNNTGTNG-3' DNA consensus sequence. Involved in megakaryocyte differentiation. This is Zinc finger protein Pegasus (IKZF5) from Bos taurus (Bovine).